Here is a 1250-residue protein sequence, read N- to C-terminus: DNA topoisomerase 3-alpha (1250 aa).

One can recognise a Toprim domain in the interval K27 to S171. The 422-residue stretch at D189–Y610 folds into the Topo IA-type catalytic domain. The active-site O-(5'-phospho-DNA)-tyrosine intermediate is Y356. The span at R769–G835 shows a compositional bias: gly residues. Disordered regions lie at residues R769–E899 and N953–C1035. A compositionally biased stretch (basic and acidic residues) spans P840–K865. A compositionally biased stretch (low complexity) spans A866–S886. Over residues T956–Q965 the composition is skewed to polar residues. Composition is skewed to basic and acidic residues over residues Q966 to A994 and P1012 to S1021. Residues T1022–V1033 are compositionally biased toward low complexity. Positions 1035, 1038, 1061, and 1067 each coordinate Zn(2+). A GRF-type 1 zinc finger spans residues C1035–P1076. Residues F1069 to V1150 are disordered. A compositionally biased stretch (polar residues) spans S1079–V1101. Over residues S1106–T1134 the composition is skewed to low complexity. Residues C1152, C1154, C1177, and C1184 each coordinate Zn(2+). The segment at C1152 to D1193 adopts a GRF-type 2 zinc-finger fold. Residues K1188 to L1231 form a disordered region. Over residues N1195 to T1220 the composition is skewed to polar residues.

The protein belongs to the type IA topoisomerase family.

It carries out the reaction ATP-independent breakage of single-stranded DNA, followed by passage and rejoining.. Functionally, releases the supercoiling and torsional tension of DNA introduced during the DNA replication and transcription by transiently cleaving and rejoining one strand of the DNA duplex. Introduces a single-strand break via transesterification at a target site in duplex DNA. The scissile phosphodiester is attacked by the catalytic tyrosine of the enzyme, resulting in the formation of a DNA-(5'-phosphotyrosyl)-enzyme intermediate and the expulsion of a 3'-OH DNA strand. The free DNA strand than undergoes passage around the unbroken strand thus removing DNA supercoils. Finally, in the religation step, the DNA 3'-OH attacks the covalent intermediate to expel the active-site tyrosine and restore the DNA phosphodiester backbone. Weakly relaxes negative supercoils and displays a distinct preference for binding single-stranded DNA. The chain is DNA topoisomerase 3-alpha (Top3alpha) from Drosophila melanogaster (Fruit fly).